The chain runs to 202 residues: Large ribosomal subunit protein uL18 (202 aa).

This sequence belongs to the universal ribosomal protein uL18 family. In terms of assembly, part of the 50S ribosomal subunit. Contacts the 5S and 23S rRNAs.

This is one of the proteins that bind and probably mediate the attachment of the 5S RNA into the large ribosomal subunit, where it forms part of the central protuberance. This is Large ribosomal subunit protein uL18 from Staphylothermus marinus (strain ATCC 43588 / DSM 3639 / JCM 9404 / F1).